Here is a 198-residue protein sequence, read N- to C-terminus: NAD(P)H dehydrogenase (quinone) (198 aa).

The region spanning 4–189 (VLVLYYSMYG…SIARYQGEYV (186 aa)) is the Flavodoxin-like domain. Residues 10–15 (SMYGHI) and 78–80 (TRF) contribute to the FMN site. Tyr-12 is an NAD(+) binding site. Substrate is bound at residue Trp-98. Residues 113 to 118 (STGTGG) and His-133 each bind FMN.

Belongs to the WrbA family. It depends on FMN as a cofactor.

The enzyme catalyses a quinone + NADH + H(+) = a quinol + NAD(+). It catalyses the reaction a quinone + NADPH + H(+) = a quinol + NADP(+). In Escherichia fergusonii (strain ATCC 35469 / DSM 13698 / CCUG 18766 / IAM 14443 / JCM 21226 / LMG 7866 / NBRC 102419 / NCTC 12128 / CDC 0568-73), this protein is NAD(P)H dehydrogenase (quinone).